A 430-amino-acid polypeptide reads, in one-letter code: Tektin-2 (430 aa).

Coiled coils occupy residues 82-160 (LTDL…QAFE) and 273-379 (EKVY…DIAC).

It belongs to the tektin family. In terms of assembly, microtubule inner protein component of sperm flagellar doublet microtubules. May interact with CCDC172. Tyrosine phosphorylated. In terms of processing, ubiquitinated, leading to its degradation. Deubiquitinated by USP16, promoting its stability.

The protein resides in the cytoplasm. It is found in the cytoskeleton. It localises to the cilium axoneme. The protein localises to the flagellum axoneme. Its subcellular location is the microtubule organizing center. Functionally, microtubule inner protein (MIP) part of the dynein-decorated doublet microtubules (DMTs) in cilia and flagellar axoneme. Plays a key role in the assembly or attachment of the inner dynein arm to microtubules in sperm flagella and tracheal cilia. Forms filamentous polymers in the walls of ciliary and flagellar microtubules. This is Tektin-2 (TEKT2) from Macaca fascicularis (Crab-eating macaque).